Consider the following 324-residue polypeptide: Probable tRNA-dihydrouridine synthase (324 aa).

FMN is bound by residues 18 to 20 and Q73; that span reads PMA. C103 functions as the Proton donor in the catalytic mechanism. Residues K142, 203–205, and 227–228 contribute to the FMN site; these read NGD and GR.

It belongs to the Dus family. It depends on FMN as a cofactor.

The enzyme catalyses a 5,6-dihydrouridine in tRNA + NAD(+) = a uridine in tRNA + NADH + H(+). The catalysed reaction is a 5,6-dihydrouridine in tRNA + NADP(+) = a uridine in tRNA + NADPH + H(+). In terms of biological role, catalyzes the synthesis of 5,6-dihydrouridine (D), a modified base found in the D-loop of most tRNAs, via the reduction of the C5-C6 double bond in target uridines. This chain is Probable tRNA-dihydrouridine synthase (dus), found in Rhodobacter capsulatus (strain ATCC BAA-309 / NBRC 16581 / SB1003).